Reading from the N-terminus, the 274-residue chain is Eukaryotic translation initiation factor 3 subunit G (274 aa).

The 79-residue stretch at 192–270 (TAIRISNLSN…LILNVEWSKP (79 aa)) folds into the RRM domain.

This sequence belongs to the eIF-3 subunit G family. Component of the eukaryotic translation initiation factor 3 (eIF-3) complex.

The protein localises to the cytoplasm. Its function is as follows. RNA-binding component of the eukaryotic translation initiation factor 3 (eIF-3) complex, which is involved in protein synthesis of a specialized repertoire of mRNAs and, together with other initiation factors, stimulates binding of mRNA and methionyl-tRNAi to the 40S ribosome. The eIF-3 complex specifically targets and initiates translation of a subset of mRNAs involved in cell proliferation. This subunit can bind 18S rRNA. This is Eukaryotic translation initiation factor 3 subunit G from Bombyx mori (Silk moth).